A 451-amino-acid polypeptide reads, in one-letter code: Glycine--tRNA ligase (451 aa).

Residues arginine 99 and glutamate 168 each coordinate substrate. ATP-binding positions include 200–202 (RNE), 210–215 (FRTREF), 284–285 (EL), and 328–331 (GLDR). 215 to 219 (FEQME) is a binding site for substrate. A substrate-binding site is contributed by 324 to 328 (EPSVG).

It belongs to the class-II aminoacyl-tRNA synthetase family. As to quaternary structure, homodimer.

It localises to the cytoplasm. It carries out the reaction tRNA(Gly) + glycine + ATP = glycyl-tRNA(Gly) + AMP + diphosphate. Its function is as follows. Catalyzes the attachment of glycine to tRNA(Gly). This is Glycine--tRNA ligase from Mycoplasmopsis synoviae (strain 53) (Mycoplasma synoviae).